A 1515-amino-acid polypeptide reads, in one-letter code: Apolipophorin (1515 aa).

The VWFD domain maps to leucine 952 to proline 1118. Cysteine 976 and cysteine 1117 are joined by a disulfide. Asparagine 988 is a glycosylation site (N-linked (GlcNAc...) asparagine).

Hemolymph.

It is found in the secreted. Mediates transport for various types of lipids in hemolymph. Acts by forming lipoprotein particles that bind lipoproteins and lipids. Binds the A.niger cell wall component alpha-1,3-glucan, a fungal pathogen-associated molecular pattern (PAMP) that activates the host immune response. This is Apolipophorin from Galleria mellonella (Greater wax moth).